Reading from the N-terminus, the 297-residue chain is Adrenocorticotropic hormone receptor (297 aa).

Topologically, residues 1-23 (MKHIIHASGNVNGTARNNSDCPH) are extracellular. Residues Asn12 and Asn17 are each glycosylated (N-linked (GlcNAc...) asparagine). 2 cysteine pairs are disulfide-bonded: Cys21/Cys253 and Cys245/Cys251. Residues 24 to 49 (VALPEEIFFIISITGVLENLIIILAV) form a helical membrane-spanning segment. Over 50–58 (IKNKNLQFP) the chain is Cytoplasmic. The helical transmembrane segment at 59 to 79 (MYFFICSLAISDMLGSLYKIL) threads the bilayer. Over 80-104 (ESILIMFRNMGYFKPHGSFETTTDD) the chain is Extracellular. A helical membrane pass occupies residues 105–126 (IIDTMFILSLLGSIFSLLAIAV). The Cytoplasmic segment spans residues 127 to 147 (DRYITIFHALQYHSIVTMHRT). Residues 148-168 (IAVLSIIWTFCIGSGITMVLF) form a helical membrane-spanning segment. At 169-180 (SHHVPTVLTFTS) the chain is on the extracellular side. A helical transmembrane segment spans residues 181–199 (LFPLMLVFILCLYVHMFLM). Residues 200-217 (ARSHARNISTLPRGNMRG) are Cytoplasmic-facing. Residues 218-244 (AITLTILLGVFIFCWAPFILHILLVTF) traverse the membrane as a helical segment. Over 245–256 (CPNNPYCTCYIS) the chain is Extracellular. Residues 257-278 (LFHVNGMLIMCNAVIDPFIYAF) form a helical membrane-spanning segment. Residues 279-297 (RSPELRSAFRRMISYSKCL) are Cytoplasmic-facing. The S-palmitoyl cysteine moiety is linked to residue Cys296.

The protein belongs to the G-protein coupled receptor 1 family. In terms of assembly, homodimer. Interacts with corticotropin (ACTH). Interacts with MRAP; this interaction targets MC2R to the plasma membrane. Interacts with MRAP2; competing with MRAP for binding to MC2R and impairing the binding of corticotropin (ACTH). Post-translationally, ubiquitinated by MGRN1 that may be involved in post-endocytic trafficking and/or degradation of internalized receptor.

Its subcellular location is the cell membrane. Hormone receptor primarily expressed in adrenal cortex that plays a key role in regulating adrenocortical function. Upon corticotropin (ACTH) binding, facilitates the release of adrenal glucocorticoids, including cortisol and corticosterone. In addition, MC2R is required for fetal and neonatal adrenal gland development. Mechanistically, activates adenylate cyclase (cAMP), the MAPK cascade as well as the cAMP-dependent protein kinase A pathway leading to steroidogenic factor 1/NR5A1-mediated transcriptional activation. The protein is Adrenocorticotropic hormone receptor (MC2R) of Cavia porcellus (Guinea pig).